A 261-amino-acid polypeptide reads, in one-letter code: Zinc finger protein 664 (261 aa).

9 C2H2-type zinc fingers span residues 3 to 25 (YKCPMCREFFSERADLFMHQKVH), 31 to 53 (HKCDKCDKGFFHISELHIHWRDH), 59 to 81 (YKCDDCGKDFSTTTKLNRHKKIH), 87 to 109 (YKCYECGKAFNWSPHLQIHMRVH), 115 to 137 (YVCSECGRGFSNSSNLCMHQRVH), 143 to 165 (FKCEECGKAFRHTSSLCMHQRVH), 171 to 193 (YKCYECGKAFSQSSSLCIHQRVH), 199 to 221 (YRCCGCGKAFSQSSSLCIHQRVH), and 227 to 249 (FKCDECGKAFSQSTSLCIHQRVH). Lys257 is covalently cross-linked (Glycyl lysine isopeptide (Lys-Gly) (interchain with G-Cter in SUMO2)).

The protein belongs to the krueppel C2H2-type zinc-finger protein family. Expressed in the organ of Corti, stria vascularis, auditory nerve and retina. Lower levels in the tongue, cerebellum, small intestine and kidney.

It localises to the nucleus. Its function is as follows. May be involved in transcriptional regulation. The chain is Zinc finger protein 664 (ZNF664) from Cavia porcellus (Guinea pig).